A 473-amino-acid chain; its full sequence is 3-isopropylmalate dehydratase large subunit (473 aa).

Residues 289-319 (TVTWGTTPGQTAGITEPIPDPDDLPEEDRDT) are disordered. The span at 291 to 301 (TWGTTPGQTAG) shows a compositional bias: polar residues. Residues 307-317 (PDPDDLPEEDR) show a composition bias toward acidic residues. Residues C348, C408, and C411 each coordinate [4Fe-4S] cluster.

Belongs to the aconitase/IPM isomerase family. LeuC type 1 subfamily. As to quaternary structure, heterodimer of LeuC and LeuD. The cofactor is [4Fe-4S] cluster.

The enzyme catalyses (2R,3S)-3-isopropylmalate = (2S)-2-isopropylmalate. The protein operates within amino-acid biosynthesis; L-leucine biosynthesis; L-leucine from 3-methyl-2-oxobutanoate: step 2/4. Its function is as follows. Catalyzes the isomerization between 2-isopropylmalate and 3-isopropylmalate, via the formation of 2-isopropylmaleate. This is 3-isopropylmalate dehydratase large subunit from Halorubrum lacusprofundi (strain ATCC 49239 / DSM 5036 / JCM 8891 / ACAM 34).